Reading from the N-terminus, the 261-residue chain is 1,6-dihydroxycyclohexa-2,4-diene-1-carboxylate dehydrogenase (261 aa).

NAD(+) is bound at residue 13–37 (IVTGAAQGIGRGVALRIAQEGGCLI). Ser-145 serves as a coordination point for substrate. The active-site Proton acceptor is the Tyr-156.

It belongs to the short-chain dehydrogenases/reductases (SDR) family. As to quaternary structure, homodimer.

It catalyses the reaction (1R,6S)-1,6-dihydroxycyclohexa-2,4-diene-1-carboxylate + NAD(+) = catechol + CO2 + NADH. It participates in aromatic compound metabolism; benzoate degradation via hydroxylation; catechol from benzoate: step 2/2. Degradation of 2-hydro-1,2-dihydroxy benzoate (DHB) to catechol. In Acinetobacter baylyi (strain ATCC 33305 / BD413 / ADP1), this protein is 1,6-dihydroxycyclohexa-2,4-diene-1-carboxylate dehydrogenase (benD).